The sequence spans 205 residues: Ribosomal RNA large subunit methyltransferase E (205 aa).

S-adenosyl-L-methionine-binding residues include G50, W52, D67, N83, and D111. K151 functions as the Proton acceptor in the catalytic mechanism.

This sequence belongs to the class I-like SAM-binding methyltransferase superfamily. RNA methyltransferase RlmE family.

The protein localises to the cytoplasm. The catalysed reaction is uridine(2552) in 23S rRNA + S-adenosyl-L-methionine = 2'-O-methyluridine(2552) in 23S rRNA + S-adenosyl-L-homocysteine + H(+). Its function is as follows. Specifically methylates the uridine in position 2552 of 23S rRNA at the 2'-O position of the ribose in the fully assembled 50S ribosomal subunit. The sequence is that of Ribosomal RNA large subunit methyltransferase E from Thermoplasma acidophilum (strain ATCC 25905 / DSM 1728 / JCM 9062 / NBRC 15155 / AMRC-C165).